We begin with the raw amino-acid sequence, 272 residues long: D-aminoacyl-tRNA deacylase (272 aa).

Belongs to the DtdA deacylase family. In terms of assembly, monomer. The cofactor is Zn(2+).

It catalyses the reaction a D-aminoacyl-tRNA + H2O = a tRNA + a D-alpha-amino acid + H(+). The enzyme catalyses glycyl-tRNA(Ala) + H2O = tRNA(Ala) + glycine + H(+). In terms of biological role, D-aminoacyl-tRNA deacylase with broad substrate specificity. By recycling D-aminoacyl-tRNA to D-amino acids and free tRNA molecules, this enzyme counteracts the toxicity associated with the formation of D-aminoacyl-tRNA entities in vivo. The polypeptide is D-aminoacyl-tRNA deacylase (Thermococcus kodakarensis (strain ATCC BAA-918 / JCM 12380 / KOD1) (Pyrococcus kodakaraensis (strain KOD1))).